Consider the following 333-residue polypeptide: Receptor polysaccharide phosphotransferase WefC (333 aa).

Belongs to the stealth family.

Its function is as follows. Part of the type 2Gn receptor polysaccharide (RPS) biosynthesis locus. Essential for cell surface RPS production, and for synthesis of the host-like GalNAc beta 1-3Gal (Gn) motif of the RPS. Probably encodes a 1-3Gal alpha transferase. In Streptococcus gordonii, this protein is Receptor polysaccharide phosphotransferase WefC (wefC).